The chain runs to 128 residues: MAKLTKDELIEAFKEMTLIELSEFVKEFEEVFEVTAAAPVAVAAAGAAGGEAAAAEEKDEFDVVLEDAGAKKIGVIKVVRELVSGLGLKEAKELVEGAPKAILEGANKDDAEAAKAKLEEAGAKVTLK.

It belongs to the bacterial ribosomal protein bL12 family. Homodimer. Part of the ribosomal stalk of the 50S ribosomal subunit. Forms a multimeric L10(L12)X complex, where L10 forms an elongated spine to which 2 to 4 L12 dimers bind in a sequential fashion. Binds GTP-bound translation factors.

Functionally, forms part of the ribosomal stalk which helps the ribosome interact with GTP-bound translation factors. Is thus essential for accurate translation. This Corynebacterium efficiens (strain DSM 44549 / YS-314 / AJ 12310 / JCM 11189 / NBRC 100395) protein is Large ribosomal subunit protein bL12.